The following is a 129-amino-acid chain: Snaclec rhodocetin subunit beta (129 aa).

Residues Arg-3 to Phe-125 enclose the C-type lectin domain. Cystine bridges form between Cys-4-Cys-15, Cys-32-Cys-123, and Cys-98-Cys-115.

Heterotetramer of subunit alpha, beta, gamma and delta; only the gamma and the delta subunits are disulfide-linked. Alpha-beta heterodimer and gamma-delta heterodimer associate orthogonally, giving a cruciform conformation. This heterotetramer may covalently dimerizes thanks to the gamma subunit. Expressed by the venom gland.

It is found in the secreted. Potent inhibitor of collagen-induced platelet aggregation. It acts by binding to the integrin alpha2A domain and blocks collagen binding to integrin alpha-2/beta-1 (ITGA2/ITGB1). The gamma/delta subunits mainly contribute to this activity. This Calloselasma rhodostoma (Malayan pit viper) protein is Snaclec rhodocetin subunit beta.